A 454-amino-acid polypeptide reads, in one-letter code: Aspartate aminotransferase P2, mitochondrial (454 aa).

A mitochondrion-targeting transit peptide spans 1–49 (SSLLSIPSLSLQYNDKLKVGGNSLRFSKEQSNTFSNAKSSCRISMVAAV). 3 residues coordinate L-aspartate: Gly-86, Trp-182, and Asn-235. Lys-299 is subject to N6-(pyridoxal phosphate)lysine. Arg-428 is a binding site for L-aspartate.

This sequence belongs to the class-I pyridoxal-phosphate-dependent aminotransferase family. As to quaternary structure, homodimer. Pyridoxal 5'-phosphate serves as cofactor.

It is found in the mitochondrion matrix. It carries out the reaction L-aspartate + 2-oxoglutarate = oxaloacetate + L-glutamate. Functionally, important for the metabolism of amino acids and Krebs-cycle related organic acids. In plants, it is involved in nitrogen metabolism and in aspects of carbon and energy metabolism. The chain is Aspartate aminotransferase P2, mitochondrial from Lupinus angustifolius (Narrow-leaved blue lupine).